The chain runs to 508 residues: Photosystem II CP47 reaction center protein (508 aa).

Transmembrane regions (helical) follow at residues 21-36 (AVHL…WAGS), 101-115 (IVLS…IWHW), 140-156 (GIHL…FGAF), 203-218 (IAAG…FHLC), 237-252 (VLSS…AFVV), and 457-472 (CFAL…HGAR).

It belongs to the PsbB/PsbC family. PsbB subfamily. PSII is composed of 1 copy each of membrane proteins PsbA, PsbB, PsbC, PsbD, PsbE, PsbF, PsbH, PsbI, PsbJ, PsbK, PsbL, PsbM, PsbT, PsbX, PsbY, PsbZ, Psb30/Ycf12, at least 3 peripheral proteins of the oxygen-evolving complex and a large number of cofactors. It forms dimeric complexes. It depends on Binds multiple chlorophylls. PSII binds additional chlorophylls, carotenoids and specific lipids. as a cofactor.

It localises to the plastid. The protein resides in the chloroplast thylakoid membrane. One of the components of the core complex of photosystem II (PSII). It binds chlorophyll and helps catalyze the primary light-induced photochemical processes of PSII. PSII is a light-driven water:plastoquinone oxidoreductase, using light energy to abstract electrons from H(2)O, generating O(2) and a proton gradient subsequently used for ATP formation. The sequence is that of Photosystem II CP47 reaction center protein from Chlorella vulgaris (Green alga).